Reading from the N-terminus, the 179-residue chain is Transcription factor NF-E4 (179 aa).

Lys-43 bears the N6-acetyllysine mark. Residues 100 to 179 (AMKATGPHNA…QLPSLHLSQG (80 aa)) are disordered. Composition is skewed to polar residues over residues 143–153 (LSQSNPPTRIS) and 163–179 (ALEQTPQQLPSLHLSQG).

As to quaternary structure, component of the SSP (stage selector protein) complex, which appears to be a heteromer of TFCP2 and 2 copies of NFE4. Interacts with HDAC1 and PCAF. Isoform 2 interacts with TFCP2. Post-translationally, acetylation at Lys-43 prolongs the protein half-life by preventing ubiquitin-mediated degradation and reduces the interaction between NF-E4 and HDAC1, potentially maximizing the activating ability of the factor at the gamma-promoter. Ubiquitinated; leading to its degradation by the proteasome. Acetylation at Lys-43 prevents ubiquitination. In terms of tissue distribution, specifically expressed in fetal liver, cord blood and bone marrow. Also expressed in the K562 and HEL cell lines, which constitutively express the fetal globin genes.

It is found in the nucleus. Functionally, functions as part of the SSP (stage selector protein) complex, a complex that contributes to the preferential expression of the gamma-gene in fetal erythroid cells by facilitating the interaction of the gamma-globin genes with enhancer elements contained in the locus control region (LCR). The complex binds to the stage selector element (SSE) in the proximal gamma-globin promoter. In contrast, isoform 2 acts as a repressor of gamma-globin gene expression by preventing NFE2 and RNA polymerase II recruitment to the promoter. The sequence is that of Transcription factor NF-E4 (NFE4) from Homo sapiens (Human).